The chain runs to 484 residues: Regulator of G-protein signaling 9 (484 aa).

One can recognise a DEP domain in the interval 30–105 (PDTGVRVQNQ…PDSSLYRFQT (76 aa)). A G protein gamma domain is found at 219–280 (VVSVRKEIMY…ITDDTQFWDL (62 aa)). The region spanning 299-414 (NFSELIRDPK…LKSPIYKEML (116 aa)) is the RGS domain. Positions 460 to 484 (TTVDITQVMSKLDRRSQLRKEPPPK) are disordered. Residues 470–484 (KLDRRSQLRKEPPPK) show a composition bias toward basic and acidic residues.

As to quaternary structure, heterodimer with GNB5. Interacts with RGS7BP, leading to regulate the subcellular location of the heterodimer formed with GNB5. Component of the RGS9-1-Gbeta5 complex composed of RGS9 (RGS9-1), Gbeta5 (GNB5) and RGS9BP. Interacts with PDE6G and GNAT1. Phosphorylation is decreased by light exposition. Photoreceptor outer segments.

It is found in the membrane. Its function is as follows. Inhibits signal transduction by increasing the GTPase activity of G protein alpha subunits thereby driving them into their inactive GDP-bound form. Binds to GNAT1. Involved in phototransduction; key element in the recovery phase of visual transduction. This is Regulator of G-protein signaling 9 (RGS9) from Bos taurus (Bovine).